The chain runs to 162 residues: Glutathione peroxidase-like peroxiredoxin GPX5 (162 aa).

At Cys38 the chain carries S-selanylcysteine. Residue Asn87 is part of the active site.

The protein belongs to the glutathione peroxidase family. Cys-87 is S-selanylated when selenium levels are high. S-selanylation may increase or be important for glutathione peroxidase activity.

Its subcellular location is the cytoplasm. The catalysed reaction is 2 glutathione + H2O2 = glutathione disulfide + 2 H2O. It catalyses the reaction a hydroperoxide + [thioredoxin]-dithiol = an alcohol + [thioredoxin]-disulfide + H2O. In terms of biological role, has thioredoxin peroxidase activity. May also have glutathione peroxidase activity, although this activity is controversial. Protects cells against reactive oxygen species, which may include photooxidative stress, hydrogen peroxide and organic hydroperoxides. This chain is Glutathione peroxidase-like peroxiredoxin GPX5, found in Chlamydomonas reinhardtii (Chlamydomonas smithii).